The primary structure comprises 124 residues: Non-structural protein 2 (124 aa).

Residues 121 to 124 (DLNP) carry the DLNP; interaction with MAP1B motif.

This sequence belongs to the pneumovirus non-structural protein 2 family. As to quaternary structure, monomer (instable). Homomultimer. Heteromultimer with NS1. Interacts with host RIGI (via N-terminus); this interaction prevents host signaling pathway involved in interferon production. Interacts with host MAP1B/microtubule-associated protein 1B.

Its subcellular location is the host mitochondrion. Its function is as follows. Plays a major role in antagonizing the type I IFN-mediated antiviral response. Acts cooperatively with NS1 to repress activation and nuclear translocation of host IFN-regulatory factor IRF3. Interacts with the host cytoplasmic sensor of viral nucleic acids RIGI and prevents the interaction with its downstream partner MAVS. Together with NS2, participates in the proteasomal degradation of host STAT2, IRF3, IRF7, TBK1 and RIGI through a NS-degradasome involving CUL2 and Elongin-C. The degradasome requires an intact mitochondrial MAVS. Induces host SOCS1 expression. Induces activation of NF-kappa-B. Suppresses premature apoptosis by an NF-kappa-B-dependent, interferon-independent mechanism promoting continued viral replication. This Human respiratory syncytial virus A (strain A2) protein is Non-structural protein 2 (1B).